The sequence spans 512 residues: 2,3-bisphosphoglycerate-independent phosphoglycerate mutase (512 aa).

Asp11 and Ser61 together coordinate Mn(2+). The active-site Phosphoserine intermediate is the Ser61. Residues His122, 152-153, Arg184, Arg190, 259-262, and Lys332 each bind substrate; these read RD and RADR. Residues Asp399, His403, Asp440, His441, and His459 each contribute to the Mn(2+) site.

The protein belongs to the BPG-independent phosphoglycerate mutase family. As to quaternary structure, monomer. Mn(2+) is required as a cofactor.

The enzyme catalyses (2R)-2-phosphoglycerate = (2R)-3-phosphoglycerate. It participates in carbohydrate degradation; glycolysis; pyruvate from D-glyceraldehyde 3-phosphate: step 3/5. Its function is as follows. Catalyzes the interconversion of 2-phosphoglycerate and 3-phosphoglycerate. This is 2,3-bisphosphoglycerate-independent phosphoglycerate mutase from Francisella philomiragia subsp. philomiragia (strain ATCC 25017 / CCUG 19701 / FSC 153 / O#319-036).